The chain runs to 198 residues: DnaJ homolog subfamily C member 12 (198 aa).

Methionine 1 bears the N-acetylmethionine mark. In terms of domain architecture, J spans 14-79; that stretch reads DYYTLLGCDE…ESRARYDHWR (66 aa). Positions 114–156 are enriched in basic and acidic residues; the sequence is EESDKTHTTKMENEECNEQRERKKEELASTAEKTEQKEPKPLE. The tract at residues 114-169 is disordered; the sequence is EESDKTHTTKMENEECNEQRERKKEELASTAEKTEQKEPKPLEKSVSPQNSDSSGF. Residues serine 160, serine 166, and serine 182 each carry the phosphoserine modification.

In terms of assembly, interacts with HSPA8. Interacts with TPH1. Interacts with TPH2. Expressed at high levels in brain, heart, and testis, and at reduced levels in kidney and stomach.

Its subcellular location is the cytoplasm. In terms of biological role, probable co-chaperone that participates in the proper folding of biopterin-dependent aromatic amino acid hydroxylases, which include phenylalanine-4-hydroxylase (PAH), tyrosine 3-monooxygenase (TH) and peripheral and neuronal tryptophan hydroxylases (TPH1 and TPH2). In Homo sapiens (Human), this protein is DnaJ homolog subfamily C member 12 (DNAJC12).